A 20-amino-acid chain; its full sequence is Neurotoxin BmK 18(2) (20 aa).

An LCN-type CS-alpha/beta domain is found at 2-20 (RDAYIAEDYDCVYHCARDA).

Belongs to the long (4 C-C) scorpion toxin superfamily. Sodium channel inhibitor family. Alpha subfamily. As to expression, expressed by the venom gland.

It localises to the secreted. In terms of biological role, binds to sodium channels (Nav) and inhibits the inactivation of the activated channels, thereby blocking neuronal transmission. The sequence is that of Neurotoxin BmK 18(2) from Olivierus martensii (Manchurian scorpion).